Reading from the N-terminus, the 124-residue chain is Small ribosomal subunit protein bS16 (124 aa).

Residues 84–110 (EKAERKNLKKGEPGKAAKERAEKRAAR) are compositionally biased toward basic and acidic residues. A disordered region spans residues 84–124 (EKAERKNLKKGEPGKAAKERAEKRAAREAAANAPAEEAASE). The segment covering 111 to 124 (EAAANAPAEEAASE) has biased composition (low complexity).

The protein belongs to the bacterial ribosomal protein bS16 family.

The polypeptide is Small ribosomal subunit protein bS16 (Paracoccus denitrificans (strain Pd 1222)).